The primary structure comprises 401 residues: Argininosuccinate synthase (401 aa).

Residue 9–17 coordinates ATP; sequence AYSGGLDTS. Residue Tyr86 coordinates L-citrulline. ATP is bound at residue Gly116. Positions 118, 122, and 123 each coordinate L-aspartate. Residue Asn122 coordinates L-citrulline. Residues Arg126, Ser174, Ser183, Glu259, and Tyr271 each coordinate L-citrulline.

Belongs to the argininosuccinate synthase family. Type 1 subfamily. As to quaternary structure, homotetramer.

The protein localises to the cytoplasm. It catalyses the reaction L-citrulline + L-aspartate + ATP = 2-(N(omega)-L-arginino)succinate + AMP + diphosphate + H(+). Its pathway is amino-acid biosynthesis; L-arginine biosynthesis; L-arginine from L-ornithine and carbamoyl phosphate: step 2/3. In Bacillus thuringiensis (strain Al Hakam), this protein is Argininosuccinate synthase.